A 209-amino-acid chain; its full sequence is MADS-box transcription factor 2 (209 aa).

Residues 1–61 (MGRGKIEIKR…GKLYDYCSPK (61 aa)) enclose the MADS-box domain. Residues 84–170 (HKSLSAEIDR…AFKLHQQDIA (87 aa)) enclose the K-box domain.

Highly expressed in anthers and carpels. Expressed in pollen, tapetum and stigma.

It is found in the nucleus. Functionally, probable transcription factor involved in the development of floral organs. B-class protein required for normal development of lodicules (whorl 2). This is MADS-box transcription factor 2 (MADS2) from Oryza sativa subsp. japonica (Rice).